Consider the following 331-residue polypeptide: Beta-ketoacyl-[acyl-carrier-protein] synthase III (331 aa).

Catalysis depends on residues Cys-113 and His-256. An ACP-binding region spans residues 257-261 (QANKR). Asn-286 is an active-site residue.

The protein belongs to the thiolase-like superfamily. FabH family. As to quaternary structure, homodimer.

It is found in the cytoplasm. It catalyses the reaction malonyl-[ACP] + acetyl-CoA + H(+) = 3-oxobutanoyl-[ACP] + CO2 + CoA. It participates in lipid metabolism; fatty acid biosynthesis. Its function is as follows. Catalyzes the condensation reaction of fatty acid synthesis by the addition to an acyl acceptor of two carbons from malonyl-ACP. Catalyzes the first condensation reaction which initiates fatty acid synthesis and may therefore play a role in governing the total rate of fatty acid production. Possesses both acetoacetyl-ACP synthase and acetyl transacylase activities. Its substrate specificity determines the biosynthesis of branched-chain and/or straight-chain of fatty acids. The chain is Beta-ketoacyl-[acyl-carrier-protein] synthase III from Solibacter usitatus (strain Ellin6076).